Reading from the N-terminus, the 70-residue chain is Small ribosomal subunit protein bS21 (70 aa).

Belongs to the bacterial ribosomal protein bS21 family.

The chain is Small ribosomal subunit protein bS21 from Paracidovorax citrulli (strain AAC00-1) (Acidovorax citrulli).